Here is a 406-residue protein sequence, read N- to C-terminus: Probable endo-xylogalacturonan hydrolase A (406 aa).

A signal peptide spans Met1–Ala18. The disordered stretch occupies residues Pro20–Asp49. PbH1 repeat units lie at residues Thr183 to Ala213, Ser214 to Pro235, Ala237 to Ser257, Val266 to Pro289, Val299 to Ser320, and Thr368 to Gly390. The active-site Proton donor is the Asp228. N-linked (GlcNAc...) asparagine glycosylation is present at Asn244. His251 is an active-site residue. 3 N-linked (GlcNAc...) asparagine glycosylation sites follow: Asn273, Asn278, and Asn301.

This sequence belongs to the glycosyl hydrolase 28 family.

It localises to the secreted. In terms of biological role, pectinolytic enzyme involved in the degradation of xylogalacturonan (xga), a galacturonan backbone heavily substituted with xylose, and which is one important component of the hairy regions of pectin. Activity requires a galacturonic acid backbone substituted with xylose. This is Probable endo-xylogalacturonan hydrolase A (xghA) from Aspergillus flavus (strain ATCC 200026 / FGSC A1120 / IAM 13836 / NRRL 3357 / JCM 12722 / SRRC 167).